The following is a 211-amino-acid chain: MDITIVNHPLVASRLTLLRDERSDNAAFRAAANDLGAMLIYEASRDLEVEHFDTKTPVAMAEGTRLKQPPIIVPIIRAGLGMIDPALSMIPDAQVGFIGLARDEETHEPVPYLEALPQDLSNQPVFLVDPMLATGGSLLHAIRLLADRGATDITAICMVSAQPGVDALAESGLPVRLVTATIDPGLDENAYIVPGLGDAGDRLYGPRNIDL.

Residues Arg-77, Arg-102, and 129-137 (DPMLATGGS) contribute to the 5-phospho-alpha-D-ribose 1-diphosphate site. Residues Ile-192 and 197-199 (GDA) contribute to the uracil site. Asp-198 lines the 5-phospho-alpha-D-ribose 1-diphosphate pocket.

Belongs to the UPRTase family. Requires Mg(2+) as cofactor.

The enzyme catalyses UMP + diphosphate = 5-phospho-alpha-D-ribose 1-diphosphate + uracil. Its pathway is pyrimidine metabolism; UMP biosynthesis via salvage pathway; UMP from uracil: step 1/1. Its activity is regulated as follows. Allosterically activated by GTP. Catalyzes the conversion of uracil and 5-phospho-alpha-D-ribose 1-diphosphate (PRPP) to UMP and diphosphate. The chain is Uracil phosphoribosyltransferase from Corynebacterium glutamicum (strain R).